Here is a 271-residue protein sequence, read N- to C-terminus: 3-methyl-2-oxobutanoate hydroxymethyltransferase (271 aa).

Mg(2+)-binding residues include aspartate 53 and aspartate 92. Residues 53 to 54, aspartate 92, and lysine 120 each bind 3-methyl-2-oxobutanoate; that span reads DS. Glutamate 122 contributes to the Mg(2+) binding site. Catalysis depends on glutamate 189, which acts as the Proton acceptor.

The protein belongs to the PanB family. Homodecamer; pentamer of dimers. The cofactor is Mg(2+).

It is found in the cytoplasm. It carries out the reaction 3-methyl-2-oxobutanoate + (6R)-5,10-methylene-5,6,7,8-tetrahydrofolate + H2O = 2-dehydropantoate + (6S)-5,6,7,8-tetrahydrofolate. The protein operates within cofactor biosynthesis; (R)-pantothenate biosynthesis; (R)-pantoate from 3-methyl-2-oxobutanoate: step 1/2. Catalyzes the reversible reaction in which hydroxymethyl group from 5,10-methylenetetrahydrofolate is transferred onto alpha-ketoisovalerate to form ketopantoate. The sequence is that of 3-methyl-2-oxobutanoate hydroxymethyltransferase from Burkholderia vietnamiensis (strain G4 / LMG 22486) (Burkholderia cepacia (strain R1808)).